The following is a 250-amino-acid chain: Ubiquinone/menaquinone biosynthesis C-methyltransferase UbiE (250 aa).

S-adenosyl-L-methionine is bound by residues serine 73, aspartate 94, and 122–123 (NA).

This sequence belongs to the class I-like SAM-binding methyltransferase superfamily. MenG/UbiE family.

The catalysed reaction is a 2-demethylmenaquinol + S-adenosyl-L-methionine = a menaquinol + S-adenosyl-L-homocysteine + H(+). It catalyses the reaction a 2-methoxy-6-(all-trans-polyprenyl)benzene-1,4-diol + S-adenosyl-L-methionine = a 5-methoxy-2-methyl-3-(all-trans-polyprenyl)benzene-1,4-diol + S-adenosyl-L-homocysteine + H(+). Its pathway is quinol/quinone metabolism; menaquinone biosynthesis; menaquinol from 1,4-dihydroxy-2-naphthoate: step 2/2. The protein operates within cofactor biosynthesis; ubiquinone biosynthesis. In terms of biological role, methyltransferase required for the conversion of demethylmenaquinol (DMKH2) to menaquinol (MKH2) and the conversion of 2-polyprenyl-6-methoxy-1,4-benzoquinol (DDMQH2) to 2-polyprenyl-3-methyl-6-methoxy-1,4-benzoquinol (DMQH2). In Legionella pneumophila (strain Paris), this protein is Ubiquinone/menaquinone biosynthesis C-methyltransferase UbiE.